Here is a 271-residue protein sequence, read N- to C-terminus: Beta-lysine N(6)-acetyltransferase (271 aa).

A disordered region spans residues 86 to 122; sequence LRKDRGTGKNQKKKKISRKKDNWKKRKEKSRLPEGYT. Positions 95–114 are enriched in basic residues; that stretch reads NQKKKKISRKKDNWKKRKEK. The region spanning 121 to 269 is the N-acetyltransferase domain; sequence YTLRPAVQAD…GFEDMNIWCR (149 aa).

The protein belongs to the acetyltransferase family.

It carries out the reaction (3S)-3,6-diaminohexanoate + acetyl-CoA = (3S)-6-acetamido-3-aminohexanoate + CoA + H(+). In terms of biological role, catalyzes the acetylation of beta-lysine to N6-acetyl-beta-lysine, a compatible solute produced by methanogenic archaea that helps cells to cope with salt stress. This is Beta-lysine N(6)-acetyltransferase from Methanosarcina mazei (strain ATCC BAA-159 / DSM 3647 / Goe1 / Go1 / JCM 11833 / OCM 88) (Methanosarcina frisia).